The chain runs to 410 residues: Tyrosine--tRNA ligase (410 aa).

Tyrosine 36 serves as a coordination point for L-tyrosine. A 'HIGH' region motif is present at residues 41–50; that stretch reads ATADSLTAGH. L-tyrosine-binding residues include tyrosine 169 and glutamine 173. The 'KMSKS' region motif lies at 229 to 233; sequence KMGKT. Position 232 (lysine 232) interacts with ATP. The region spanning 343-409 is the S4 RNA-binding domain; the sequence is IDLITMMIDA…GKKAYHLFRA (67 aa).

This sequence belongs to the class-I aminoacyl-tRNA synthetase family. TyrS type 1 subfamily. Homodimer.

The protein resides in the cytoplasm. It carries out the reaction tRNA(Tyr) + L-tyrosine + ATP = L-tyrosyl-tRNA(Tyr) + AMP + diphosphate + H(+). Functionally, catalyzes the attachment of tyrosine to tRNA(Tyr) in a two-step reaction: tyrosine is first activated by ATP to form Tyr-AMP and then transferred to the acceptor end of tRNA(Tyr). This Lachnoclostridium phytofermentans (strain ATCC 700394 / DSM 18823 / ISDg) (Clostridium phytofermentans) protein is Tyrosine--tRNA ligase.